We begin with the raw amino-acid sequence, 329 residues long: Biotin synthase (329 aa).

In terms of domain architecture, Radical SAM core spans 46 to 275; that stretch reads YYGNKVKLNM…TKEIRISGGR (230 aa). Positions 64, 68, and 71 each coordinate [4Fe-4S] cluster. Residues Cys-108, Cys-140, Cys-200, and Arg-270 each contribute to the [2Fe-2S] cluster site.

This sequence belongs to the radical SAM superfamily. Biotin synthase family. Homodimer. [4Fe-4S] cluster is required as a cofactor. [2Fe-2S] cluster serves as cofactor.

It carries out the reaction (4R,5S)-dethiobiotin + (sulfur carrier)-SH + 2 reduced [2Fe-2S]-[ferredoxin] + 2 S-adenosyl-L-methionine = (sulfur carrier)-H + biotin + 2 5'-deoxyadenosine + 2 L-methionine + 2 oxidized [2Fe-2S]-[ferredoxin]. Its pathway is cofactor biosynthesis; biotin biosynthesis; biotin from 7,8-diaminononanoate: step 2/2. Catalyzes the conversion of dethiobiotin (DTB) to biotin by the insertion of a sulfur atom into dethiobiotin via a radical-based mechanism. This chain is Biotin synthase, found in Anoxybacillus flavithermus (strain DSM 21510 / WK1).